A 352-amino-acid polypeptide reads, in one-letter code: uncharacterized protein (352 aa).

Positions 1-22 are cleaved as a signal peptide; that stretch reads MIFKKTILIFIISFFFISISFA. Over residues 25–47 the composition is skewed to low complexity; that stretch reads SSSSSSSSSSSSSSWSSSESSSS. Residues 25 to 49 are disordered; it reads SSSSSSSSSSSSSSWSSSESSSSPA. Asn-76, Asn-110, Asn-182, Asn-212, and Asn-223 each carry an N-linked (GlcNAc...) asparagine glycan.

The protein localises to the secreted. This is an uncharacterized protein from Dictyostelium discoideum (Social amoeba).